Reading from the N-terminus, the 63-residue chain is Large ribosomal subunit protein bL32 (63 aa).

Disordered stretches follow at residues 1–25 (MAVP…LTTP) and 42–63 (VSPK…QNND). Over residues 7–20 (KTSKQKKRSRRGHI) the composition is skewed to basic residues. Residues 54–63 (ANENKQQNND) are compositionally biased toward polar residues.

The protein belongs to the bacterial ribosomal protein bL32 family.

This is Large ribosomal subunit protein bL32 from Lactobacillus johnsonii (strain CNCM I-12250 / La1 / NCC 533).